Reading from the N-terminus, the 468-residue chain is Probable multidrug resistance protein NorM (468 aa).

The next 11 helical transmembrane spans lie at 57–79, 100–122, 142–164, 173–195, 205–227, 248–270, 280–302, 323–345, 360–382, 401–423, and 433–452; these read LAAGGLGANLFFVVVTLLQGVLT, IYWTGFALSLLLAVPAFALLSFA, YAAVLRFAAPGSLIGVGLMRSFL, LLWVSLAGVGVNAFLNYGLIHGA, GSATATTITIWLTAITLVALLHG, LFGIGWPVAITYGVESTLFLATG, SLAAHQIALNVASVAFMVPLAIG, HAGFVALGLGVAFMSLSGLVLIV, PANARTVVLATSLLGIAAVFQIV, VPMLAATLGYWGIGFPTGYWFAF, and WWGLAAGLASVAMLMTWRFH.

The protein belongs to the multi antimicrobial extrusion (MATE) (TC 2.A.66.1) family.

Its subcellular location is the cell inner membrane. Functionally, multidrug efflux pump. The chain is Probable multidrug resistance protein NorM (norM) from Burkholderia mallei (strain ATCC 23344).